The primary structure comprises 201 residues: FMN-dependent NADH:quinone oxidoreductase (201 aa).

Residues Ser10, 16 to 18 (SQS), 96 to 99 (MYNF), and 140 to 143 (SRGG) contribute to the FMN site.

The protein belongs to the azoreductase type 1 family. As to quaternary structure, homodimer. The cofactor is FMN.

It catalyses the reaction 2 a quinone + NADH + H(+) = 2 a 1,4-benzosemiquinone + NAD(+). The catalysed reaction is N,N-dimethyl-1,4-phenylenediamine + anthranilate + 2 NAD(+) = 2-(4-dimethylaminophenyl)diazenylbenzoate + 2 NADH + 2 H(+). Quinone reductase that provides resistance to thiol-specific stress caused by electrophilic quinones. In terms of biological role, also exhibits azoreductase activity. Catalyzes the reductive cleavage of the azo bond in aromatic azo compounds to the corresponding amines. The chain is FMN-dependent NADH:quinone oxidoreductase from Escherichia coli O157:H7.